The chain runs to 291 residues: Homoserine kinase (291 aa).

R80–A90 serves as a coordination point for ATP.

It belongs to the GHMP kinase family. Homoserine kinase subfamily.

It localises to the cytoplasm. It catalyses the reaction L-homoserine + ATP = O-phospho-L-homoserine + ADP + H(+). It participates in amino-acid biosynthesis; L-threonine biosynthesis; L-threonine from L-aspartate: step 4/5. Catalyzes the ATP-dependent phosphorylation of L-homoserine to L-homoserine phosphate. The chain is Homoserine kinase from Haloarcula marismortui (strain ATCC 43049 / DSM 3752 / JCM 8966 / VKM B-1809) (Halobacterium marismortui).